A 333-amino-acid chain; its full sequence is Diacylglycerol acyltransferase/mycolyltransferase Ag85C (333 aa).

Residues 1-44 form the signal peptide; that stretch reads MKFLQQMRKLFGLAAKFPARLTIAVIGTALLAGLVGVVGDTAIA. Substrate is bound at residue 86–87; that stretch reads LR. The interval 102–112 is fibronectin-binding; it reads FEEYYHSGLSV. Residues Ser170 and Asn198 each coordinate substrate. The active-site Nucleophile is Ser170. Residue Glu274 is part of the active site. Substrate-binding positions include 276–279 and 306–308; these read LTLS and HSW. Residue His306 is part of the active site.

Belongs to the mycobacterial A85 antigen family. Homodimer.

It is found in the secreted. It carries out the reaction an acyl-CoA + a 1,2-diacyl-sn-glycerol = a triacyl-sn-glycerol + CoA. The enzyme catalyses 2 alpha,alpha'-trehalose 6-mycolate = alpha,alpha'-trehalose 6,6'-bismycolate + alpha,alpha-trehalose. Functionally, the antigen 85 proteins (FbpA, FbpB, FbpC) are responsible for the high affinity of mycobacteria to fibronectin, a large adhesive glycoprotein, which facilitates the attachment of M.tuberculosis to murine alveolar macrophages (AMs). They also help to maintain the integrity of the cell wall by catalyzing the transfer of mycolic acids to cell wall arabinogalactan and through the synthesis of alpha,alpha-trehalose dimycolate (TDM, cord factor). They catalyze the transfer of a mycoloyl residue from one molecule of alpha,alpha-trehalose monomycolate (TMM) to another TMM, leading to the formation of TDM. This chain is Diacylglycerol acyltransferase/mycolyltransferase Ag85C (fbpC), found in Mycobacterium leprae (strain TN).